A 254-amino-acid chain; its full sequence is 5'-nucleotidase SurE (254 aa).

4 residues coordinate a divalent metal cation: D8, D9, S38, and N91.

Belongs to the SurE nucleotidase family. A divalent metal cation is required as a cofactor.

Its subcellular location is the cytoplasm. It carries out the reaction a ribonucleoside 5'-phosphate + H2O = a ribonucleoside + phosphate. Its function is as follows. Nucleotidase that shows phosphatase activity on nucleoside 5'-monophosphates. The sequence is that of 5'-nucleotidase SurE from Anaeromyxobacter sp. (strain Fw109-5).